The chain runs to 206 residues: MSKTTIIGIAGGSGSGKTSVTSKILKNLEGYSVALIEQDYYYKNQDHLTFEERLKTNYDHPFAFDNELLIQNLKDLRNGKTVEVPTYDYSNHTRSEKTITFEPKDVIIVEGIFALENSNLRDLMDVKIYVDTDADLRILRRIVRDIEERGRTMESVIDQYLTVVRPMHNQFIEPTKKYADIIIPEGGSNSVAIDIMTTKIQSLIQV.

Position 11–18 (11–18) interacts with ATP; the sequence is GGSGSGKT.

Belongs to the uridine kinase family.

It localises to the cytoplasm. The enzyme catalyses uridine + ATP = UMP + ADP + H(+). It catalyses the reaction cytidine + ATP = CMP + ADP + H(+). It participates in pyrimidine metabolism; CTP biosynthesis via salvage pathway; CTP from cytidine: step 1/3. Its pathway is pyrimidine metabolism; UMP biosynthesis via salvage pathway; UMP from uridine: step 1/1. The polypeptide is Uridine kinase (Macrococcus caseolyticus (strain JCSC5402) (Macrococcoides caseolyticum)).